The sequence spans 172 residues: MNWLAQLPTQRTPWLLFSGIVFLLEITALFFQYKMGLAPCIMCIYQRTAVLGLLIAGIIGTSNPEHRGVRLLAYSVWAVSSVWGFIIAREHIEMQTTTDPFAFSCEFEPNFPAFMPLHEWIPSFFAATGDCGNIDWQFAGLSMPAWMEVIFALFAATLFLLVTSRLMTKRSL.

Over 1-13 (MNWLAQLPTQRTP) the chain is Cytoplasmic. The helical transmembrane segment at 14–30 (WLLFSGIVFLLEITALF) threads the bilayer. The Periplasmic segment spans residues 31 to 48 (FQYKMGLAPCIMCIYQRT). A disulfide bridge links Cys-40 with Cys-43. The chain crosses the membrane as a helical span at residues 49-64 (AVLGLLIAGIIGTSNP). Residues 65–71 (EHRGVRL) are Cytoplasmic-facing. Residues 72 to 89 (LAYSVWAVSSVWGFIIAR) traverse the membrane as a helical segment. The Periplasmic portion of the chain corresponds to 90–145 (EHIEMQTTTDPFAFSCEFEPNFPAFMPLHEWIPSFFAATGDCGNIDWQFAGLSMPA). Cysteines 105 and 131 form a disulfide. A helical transmembrane segment spans residues 146–164 (WMEVIFALFAATLFLLVTS). Over 165-172 (RLMTKRSL) the chain is Cytoplasmic.

It belongs to the DsbB family.

It is found in the cell inner membrane. Functionally, required for disulfide bond formation in some periplasmic proteins. Acts by oxidizing the DsbA protein. In Pseudoalteromonas translucida (strain TAC 125), this protein is Disulfide bond formation protein B.